A 726-amino-acid chain; its full sequence is Serine/threonine-protein kinase PKH3 (726 aa).

The Protein kinase domain maps to 10–271; sequence FLFREELGHG…LEQIKKHKWF (262 aa). ATP contacts are provided by residues 16 to 24 and lysine 39; that span reads LGHGSYSTV. Aspartate 136 functions as the Proton acceptor in the catalytic mechanism. Residues 629–679 form a disordered region; it reads QDIPLPSPAKSSSNSGVSEPISKIPPRQLVSASEQSHKAKSEAHTKKANSY. The segment covering 663-673 has biased composition (basic and acidic residues); that stretch reads QSHKAKSEAHT.

It belongs to the protein kinase superfamily. Ser/Thr protein kinase family.

The enzyme catalyses L-seryl-[protein] + ATP = O-phospho-L-seryl-[protein] + ADP + H(+). It carries out the reaction L-threonyl-[protein] + ATP = O-phospho-L-threonyl-[protein] + ADP + H(+). Its function is as follows. Serine/threonine-protein kinase. This Eremothecium gossypii (strain ATCC 10895 / CBS 109.51 / FGSC 9923 / NRRL Y-1056) (Yeast) protein is Serine/threonine-protein kinase PKH3 (PKH3).